A 65-amino-acid polypeptide reads, in one-letter code: Large ribosomal subunit protein bL35 (65 aa).

The tract at residues 1-22 (MPKMKTKSSAKKRFKVTGSGKI) is disordered.

It belongs to the bacterial ribosomal protein bL35 family.

The chain is Large ribosomal subunit protein bL35 from Flavobacterium psychrophilum (strain ATCC 49511 / DSM 21280 / CIP 103535 / JIP02/86).